The chain runs to 245 residues: Pyridoxine 5'-phosphate synthase (245 aa).

Asn9 contributes to the 3-amino-2-oxopropyl phosphate binding site. 11–12 (DH) lines the 1-deoxy-D-xylulose 5-phosphate pocket. Residue Arg20 coordinates 3-amino-2-oxopropyl phosphate. Catalysis depends on His45, which acts as the Proton acceptor. Residues Arg47 and His52 each coordinate 1-deoxy-D-xylulose 5-phosphate. Catalysis depends on Glu72, which acts as the Proton acceptor. Residue Thr102 participates in 1-deoxy-D-xylulose 5-phosphate binding. The active-site Proton donor is His193. 3-amino-2-oxopropyl phosphate-binding positions include Gly194 and 215-216 (GH).

The protein belongs to the PNP synthase family. Homooctamer; tetramer of dimers.

It localises to the cytoplasm. The enzyme catalyses 3-amino-2-oxopropyl phosphate + 1-deoxy-D-xylulose 5-phosphate = pyridoxine 5'-phosphate + phosphate + 2 H2O + H(+). It participates in cofactor biosynthesis; pyridoxine 5'-phosphate biosynthesis; pyridoxine 5'-phosphate from D-erythrose 4-phosphate: step 5/5. In terms of biological role, catalyzes the complicated ring closure reaction between the two acyclic compounds 1-deoxy-D-xylulose-5-phosphate (DXP) and 3-amino-2-oxopropyl phosphate (1-amino-acetone-3-phosphate or AAP) to form pyridoxine 5'-phosphate (PNP) and inorganic phosphate. The chain is Pyridoxine 5'-phosphate synthase from Shewanella oneidensis (strain ATCC 700550 / JCM 31522 / CIP 106686 / LMG 19005 / NCIMB 14063 / MR-1).